Reading from the N-terminus, the 149-residue chain is Large ribosomal subunit protein bL9 (149 aa).

It belongs to the bacterial ribosomal protein bL9 family.

Binds to the 23S rRNA. The polypeptide is Large ribosomal subunit protein bL9 (Thiobacillus denitrificans (strain ATCC 25259 / T1)).